Reading from the N-terminus, the 39-residue chain is Neuropeptide F (39 aa).

Position 39 is a phenylalanine amide (F39).

Belongs to the NPY family. In terms of tissue distribution, neuronal somata and fibers.

It localises to the secreted. In terms of biological role, may have an important physiological role in neuroregulation. The protein is Neuropeptide F of Cornu aspersum (Brown garden snail).